The primary structure comprises 356 residues: Butyrate kinase (356 aa).

This sequence belongs to the acetokinase family.

It localises to the cytoplasm. It carries out the reaction butanoate + ATP = butanoyl phosphate + ADP. The protein operates within lipid metabolism; butanoate metabolism. Its function is as follows. Catalyzes the conversion of butyryl-CoA through butyryl phosphate to butyrate. The protein is Butyrate kinase (buk) of Clostridium perfringens (strain ATCC 13124 / DSM 756 / JCM 1290 / NCIMB 6125 / NCTC 8237 / Type A).